The chain runs to 123 residues: U11/U12 small nuclear ribonucleoprotein 25 kDa protein (123 aa).

A Ubiquitin-like domain is found at 32-123; sequence MTVRVCKMDG…VSFIKKLRQK (92 aa).

In terms of assembly, component of the U11/U12 snRNPs that are part of the U12-type spliceosome.

The protein resides in the nucleus. The chain is U11/U12 small nuclear ribonucleoprotein 25 kDa protein (Snrnp25) from Mus musculus (Mouse).